The sequence spans 282 residues: Benzoyl-CoA reductase subunit D (282 aa).

[4Fe-4S] cluster-binding residues include cysteine 130 and cysteine 169.

Heterotetramer composed of A, B, C, and D subunits. It depends on [4Fe-4S] cluster as a cofactor.

The enzyme catalyses cyclohexa-1,5-diene-1-carbonyl-CoA + oxidized 2[4Fe-4S]-[ferredoxin] + 2 ADP + 2 phosphate = reduced 2[4Fe-4S]-[ferredoxin] + benzoyl-CoA + 2 ATP + 2 H2O. The catalysed reaction is 3-hydroxybenzoyl-CoA + AH2 + 2 ATP + 2 H2O = 3-hydroxycyclohexa-1,5-diene-1-carbonyl-CoA + A + 2 ADP + 2 phosphate + 2 H(+). Catalyzes the anaerobic reduction of benzoyl-CoA and 3-hydroxybenzoyl-CoA to form cyclohexa-1,5-diene-1-carbonyl-CoA and 3-hydroxycyclohexa-1,5-diene-1-carbonyl-CoA, respectively. The enzyme also reduces other benzoyl-CoA analogs with small substituents at the aromatic ring. This is Benzoyl-CoA reductase subunit D (bcrD) from Thauera aromatica.